A 134-amino-acid chain; its full sequence is CDGSH iron-sulfur domain-containing protein 2 homolog (134 aa).

The Lumenal portion of the chain corresponds to 1-35; that stretch reads MESLSHLVKSTLPNYLSNLPVPDTLGGWFKLSFKD. Residues 36–58 form a helical membrane-spanning segment; sequence WLALIPPTVVVAGIGYTGYLAFC. At 59-134 the chain is on the cytoplasmic side; sequence PAAQDRCSAK…DNVGPVVVKK (76 aa). [2Fe-2S] cluster is bound by residues Cys101, Cys103, Cys112, and His116.

The protein belongs to the CISD protein family. CISD2 subfamily. It depends on [2Fe-2S] cluster as a cofactor.

The protein localises to the endoplasmic reticulum membrane. The chain is CDGSH iron-sulfur domain-containing protein 2 homolog from Drosophila willistoni (Fruit fly).